We begin with the raw amino-acid sequence, 406 residues long: 5-methylthioadenosine/S-adenosylhomocysteine deaminase (406 aa).

Positions 55 and 57 each coordinate Zn(2+). Substrate is bound by residues Glu84, Arg136, Arg148, and His173. Zn(2+) is bound at residue His200. Residues Glu203 and Asp279 each contribute to the substrate site. Asp279 is a Zn(2+) binding site.

It belongs to the metallo-dependent hydrolases superfamily. MTA/SAH deaminase family. Zn(2+) is required as a cofactor.

It carries out the reaction S-adenosyl-L-homocysteine + H2O + H(+) = S-inosyl-L-homocysteine + NH4(+). The enzyme catalyses S-methyl-5'-thioadenosine + H2O + H(+) = S-methyl-5'-thioinosine + NH4(+). In terms of biological role, catalyzes the deamination of 5-methylthioadenosine and S-adenosyl-L-homocysteine into 5-methylthioinosine and S-inosyl-L-homocysteine, respectively. Is also able to deaminate adenosine. Adenosine-5-monophosphate (AMP) and S-adenosyl-L-methionine (SAM) are not enzyme substrates. The chain is 5-methylthioadenosine/S-adenosylhomocysteine deaminase (mtaD) from Thermotoga maritima (strain ATCC 43589 / DSM 3109 / JCM 10099 / NBRC 100826 / MSB8).